Reading from the N-terminus, the 217-residue chain is Ras-related protein RGP2 (217 aa).

GTP contacts are provided by residues 19-26 (GDSGVGKS), 67-71 (DTAGQ), and 125-128 (NKSD). S-geranylgeranyl cysteine attachment occurs at residues Cys-214 and Cys-215.

It belongs to the small GTPase superfamily. Rab family.

The protein resides in the cell membrane. This chain is Ras-related protein RGP2 (RGP2), found in Oryza sativa subsp. japonica (Rice).